Here is a 259-residue protein sequence, read N- to C-terminus: Protein N-terminal and lysine N-methyltransferase efm7 (259 aa).

S-adenosyl-L-methionine-binding positions include Trp56, 83–85 (GAA), Asp105, Trp139, and Ala163.

Belongs to the class I-like SAM-binding methyltransferase superfamily. EFM7 family.

The protein resides in the cytoplasm. In terms of biological role, S-adenosyl-L-methionine-dependent protein methyltransferase that trimethylates the N-terminal glycine 'Gly-2' of elongation factor 1-alpha, before also catalyzing the mono- and dimethylation of 'Lys-3'. The chain is Protein N-terminal and lysine N-methyltransferase efm7 from Aspergillus fumigatus (strain ATCC MYA-4609 / CBS 101355 / FGSC A1100 / Af293) (Neosartorya fumigata).